Reading from the N-terminus, the 370-residue chain is MTALNKKWLSGLVAGALMAVSVGTLAAEQKTLHIYNWSDYIAPDTVANFEKETGIKVVYDVFDSNEVLEGKLMAGSTGFDLVVPSASFLERQLTAGVFQPLDKSKLPEWKNLDPELLKLVAKHDPDNKFAMPYMWATTGIGYNVDKVKAVLGENAPVDSWDLILKPENLEKLKSCGVSFLDAPEEVFATVLNYLGKDPNSTKADDYTGPATDLLLKLRPNIRYFHSSQYINDLANGDICVAIGWAGDVWQASNRAKEAKNGVNVSFSIPKEGAMAFFDVFAMPADAKNKDEAYQFLNYLLRPDVVAHISDHVFYANANKAATPLVSAEVRENPGIYPPADVRAKLFTLKVQDPKIDRVRTRAWTKVKSGK.

A signal peptide spans 1–26; the sequence is MTALNKKWLSGLVAGALMAVSVGTLA. Position 38 (serine 38) interacts with putrescine. The cysteines at positions 175 and 239 are disulfide-linked. Residues aspartate 247 and aspartate 278 each coordinate putrescine.

This sequence belongs to the bacterial solute-binding protein PotD/PotF family. In terms of assembly, the complex is composed of two ATP-binding proteins (PotG), two transmembrane proteins (PotH and PotI) and a solute-binding protein (PotF).

Its subcellular location is the periplasm. With respect to regulation, transport is feedback inhibited by intracellular polyamines. Its function is as follows. Part of the ABC transporter complex PotFGHI involved in putrescine uptake. Binds putrescine. Imports putrescine for maintenance of the optimal concentration of polyamines necessary for cell growth in the presence of glucose. This Escherichia coli (strain K12) protein is Putrescine-binding periplasmic protein PotF.